The sequence spans 76 residues: DNA-directed RNA polymerase subunit Rpo5 (76 aa).

Belongs to the archaeal Rpo5/eukaryotic RPB5 RNA polymerase subunit family. In terms of assembly, part of the RNA polymerase complex.

Its subcellular location is the cytoplasm. It catalyses the reaction RNA(n) + a ribonucleoside 5'-triphosphate = RNA(n+1) + diphosphate. In terms of biological role, DNA-dependent RNA polymerase (RNAP) catalyzes the transcription of DNA into RNA using the four ribonucleoside triphosphates as substrates. This chain is DNA-directed RNA polymerase subunit Rpo5, found in Archaeoglobus fulgidus (strain ATCC 49558 / DSM 4304 / JCM 9628 / NBRC 100126 / VC-16).